Consider the following 49-residue polypeptide: Large ribosomal subunit protein bL33 (49 aa).

This sequence belongs to the bacterial ribosomal protein bL33 family.

This chain is Large ribosomal subunit protein bL33, found in Heliobacterium modesticaldum (strain ATCC 51547 / Ice1).